A 229-amino-acid chain; its full sequence is DNA repair protein RecO (229 aa).

The protein belongs to the RecO family.

Its function is as follows. Involved in DNA repair and RecF pathway recombination. The chain is DNA repair protein RecO from Legionella pneumophila (strain Lens).